The following is a 147-amino-acid chain: Deoxyuridine 5'-triphosphate nucleotidohydrolase (147 aa).

Residues Ser-69, Gly-82, Asp-85, Tyr-88, Lys-93, Arg-137, Phe-142, and Gly-143 each contribute to the dUMP site.

The protein belongs to the dUTPase family. As to quaternary structure, homotrimer. Mg(2+) is required as a cofactor.

It catalyses the reaction dUTP + H2O = dUMP + diphosphate + H(+). Its pathway is pyrimidine metabolism; dUMP biosynthesis; dUMP from dCTP (dUTP route): step 2/2. Functionally, involved in nucleotide metabolism via production of dUMP, the immediate precursor of thymidine nucleotides, and decreases the intracellular concentration of dUTP so that uracil cannot be incorporated into DNA. Shows a significant activity against dITP, another potentially mutagenic nucleotide. The protein is Deoxyuridine 5'-triphosphate nucleotidohydrolase of Saccharomyces cerevisiae (strain ATCC 204508 / S288c) (Baker's yeast).